Reading from the N-terminus, the 405-residue chain is NADH-quinone oxidoreductase subunit D (405 aa).

It belongs to the complex I 49 kDa subunit family. In terms of assembly, NDH-1 is composed of 14 different subunits. Subunits NuoB, C, D, E, F, and G constitute the peripheral sector of the complex.

The protein resides in the cell inner membrane. It catalyses the reaction a quinone + NADH + 5 H(+)(in) = a quinol + NAD(+) + 4 H(+)(out). Its function is as follows. NDH-1 shuttles electrons from NADH, via FMN and iron-sulfur (Fe-S) centers, to quinones in the respiratory chain. The immediate electron acceptor for the enzyme in this species is believed to be ubiquinone. Couples the redox reaction to proton translocation (for every two electrons transferred, four hydrogen ions are translocated across the cytoplasmic membrane), and thus conserves the redox energy in a proton gradient. The sequence is that of NADH-quinone oxidoreductase subunit D from Sphingopyxis alaskensis (strain DSM 13593 / LMG 18877 / RB2256) (Sphingomonas alaskensis).